A 384-amino-acid polypeptide reads, in one-letter code: Actin-related protein 2/3 complex subunit 1 (384 aa).

WD repeat units follow at residues 61–99 (DHDK…TYKP), 105–146 (RINR…WVSK), 151–190 (PIKS…LDSK), 212–251 (YQGS…QSVN), and 349–383 (AHEN…VIYT).

Belongs to the WD repeat ARPC1 family. As to quaternary structure, component of the Arp2/3 complex composed of ARP2, ARP3, ARC40/p41-ARC, ARC35/p34-ARC, ARC18/p21-ARC, ARC19/p20-ARC and ARC16/p16-ARC.

The protein resides in the cytoplasm. It is found in the cytoskeleton. The protein localises to the actin patch. In terms of biological role, functions as a component of the Arp2/3 complex which is involved in regulation of actin polymerization and together with an activating nucleation-promoting factor (NPF) mediates the formation of branched actin networks. This chain is Actin-related protein 2/3 complex subunit 1 (ARC40), found in Saccharomyces cerevisiae (strain ATCC 204508 / S288c) (Baker's yeast).